A 433-amino-acid chain; its full sequence is Steroid hormone receptor ERR2 (433 aa).

The tract at residues 1 to 38 (MSSEDRHLGSSCGSFIKTEPSSPSSGIDALSHHSPSGS) is disordered. The segment at 93–211 (YMLNAIPKRL…SPPAKKPLTK (119 aa)) is interaction with NANOG. The segment at residues 100–186 (KRLCLVCGDI…RVRGGRQKYK (87 aa)) is a DNA-binding region (nuclear receptor). 2 NR C4-type zinc fingers span residues 103 to 123 (CLVC…CEAC) and 139 to 163 (CPAT…FMKC). The tract at residues 203 to 433 (PPAKKPLTKI…LFLEMLEAKV (231 aa)) is essential for ESRRB transcriptional activity and interaction with NCOA3. The NR LBD domain occupies 208-432 (PLTKIVSNLL…KLFLEMLEAK (225 aa)).

Belongs to the nuclear hormone receptor family. NR3 subfamily. In terms of assembly, binds DNA as a monomer. Interacts with NR0B1; represses ESRRB activity at the GATA6 promoter. Interacts with NANOG; reciprocally modulates their transcriptional activities and activates POU5F1 expression. Interacts with NCOA3; mediates the interaction between ESRRB and RNA polymerase II complexes and allows NCOA3 corecruitment to ESRRB, KLF4, NANOG, and SOX2 enhancer regions to trigger ESRRB-dependent gene activation involved in self-renewal and pluripotency. Interacts with KDM1A; co-occupes the core set of ESRRB targets including ELF5 and EOMES. Interacts with the multiprotein complex Integrator, at least composed of INTS1, INTS2, INTS3, INTS4, INTS5, INTS6, INTS7, INTS8, INTS9/RC74, INTS10, INTS11/CPSF3L and INTS12; ESRRB is probably not a core component of the integrator complex and associates to integrator via its interaction with INTS1 and INTS9; attracts the transcriptional machinery. Interacts with JARID2. Interacts with POU5F1; recruits ESRRB near the POU5F1-SOX2 element in the NANOG proximal promoter leading to activation of NANOG expression; the interaction is DNA independent. In terms of processing, acetylated by PCAF/KAT2 (in vitro). As to expression, highly expressed in undifferentiated ESCs. Expressed in immature horizontal cells and in rod photoreceptors at intermediate and late stages of differentiation. Expressed in endolymph-producing epithelial cells.

The protein localises to the nucleus. The protein resides in the cytoplasm. It localises to the chromosome. Its function is as follows. Transcription factor that binds a canonical ESRRB recognition (ERRE) sequence 5'TCAAGGTCA-3' localized on promoter and enhancer of targets genes regulating their expression or their transcriptional activity. Plays a role, in a LIF-independent manner, in maintainance of self-renewal and pluripotency of embryonic and trophoblast stem cells through different signaling pathways including FGF signaling pathway and Wnt signaling pathways. Involved in morula development (2-16 cells embryos) by acting as a regulator at the 8-cell stage. Upon FGF signaling pathway activation, interacts with KDM1A by directly binding to enhancer site of ELF5 and EOMES and activating their transcription leading to self-renewal of trophoblast stem cells. Also regulates expression of multiple rod-specific genes and is required for survival of this cell type. Plays a role as transcription factor activator of GATA6, NR0B1, POU5F1 and PERM1. Plays a role as transcription factor repressor of NFE2L2 transcriptional activity and ESR1 transcriptional activity. During mitosis remains bound to a subset of interphase target genes, including pluripotency regulators, through the canonical ESRRB recognition (ERRE) sequence, leading to their transcriptional activation in early G1 phase. Can coassemble on structured DNA elements with other transcription factors like SOX2, POU5F1, KDM1A and NCOA3 to trigger ESRRB-dependent gene activation. This mechanism, in the case of SOX2 corecruitment prevents the embryonic stem cells (ESCs) to epiblast stem cells (EpiSC) transition through positive regulation of NR0B1 that inhibits the EpiSC transcriptional program. Also plays a role inner ear development by controlling expression of ion channels and transporters and in early placentation. The chain is Steroid hormone receptor ERR2 from Mus musculus (Mouse).